Here is a 656-residue protein sequence, read N- to C-terminus: Vi polysaccharide export protein VexE (656 aa).

Functionally, may be involved in translocation of the Vi antigen. The protein is Vi polysaccharide export protein VexE (vexE) of Salmonella typhi.